The following is a 231-amino-acid chain: Cytochrome c oxidase subunit 2 (231 aa).

Over 1–30 the chain is Mitochondrial intermembrane; the sequence is MNNFFQGYNLLFQHSLFASYMDWFHSFNCS. A helical membrane pass occupies residues 31 to 52; that stretch reads LLLGVLVFVTLLFGYLIFGTFY. Topologically, residues 53–69 are mitochondrial matrix; it reads FKSKKIEYQFGELLCSI. The helical transmembrane segment at 70-89 threads the bilayer; it reads FPTIILLMQMVPSLSLLYYY. At 90–231 the chain is on the mitochondrial intermembrane side; the sequence is GLMNLDSNLT…FKSWCFGTME (142 aa). His-164, Cys-199, Glu-201, Cys-203, His-207, and Met-210 together coordinate Cu cation. Glu-201 provides a ligand contact to Mg(2+).

Belongs to the cytochrome c oxidase subunit 2 family. As to quaternary structure, component of the cytochrome c oxidase (complex IV, CIV), a multisubunit enzyme composed of a catalytic core of 3 subunits and several supernumerary subunits. The complex exists as a monomer or a dimer and forms supercomplexes (SCs) in the inner mitochondrial membrane with ubiquinol-cytochrome c oxidoreductase (cytochrome b-c1 complex, complex III, CIII). The cofactor is Cu cation.

It is found in the mitochondrion inner membrane. It catalyses the reaction 4 Fe(II)-[cytochrome c] + O2 + 8 H(+)(in) = 4 Fe(III)-[cytochrome c] + 2 H2O + 4 H(+)(out). Component of the cytochrome c oxidase, the last enzyme in the mitochondrial electron transport chain which drives oxidative phosphorylation. The respiratory chain contains 3 multisubunit complexes succinate dehydrogenase (complex II, CII), ubiquinol-cytochrome c oxidoreductase (cytochrome b-c1 complex, complex III, CIII) and cytochrome c oxidase (complex IV, CIV), that cooperate to transfer electrons derived from NADH and succinate to molecular oxygen, creating an electrochemical gradient over the inner membrane that drives transmembrane transport and the ATP synthase. Cytochrome c oxidase is the component of the respiratory chain that catalyzes the reduction of oxygen to water. Electrons originating from reduced cytochrome c in the intermembrane space (IMS) are transferred via the dinuclear copper A center (CU(A)) of subunit 2 and heme A of subunit 1 to the active site in subunit 1, a binuclear center (BNC) formed by heme A3 and copper B (CU(B)). The BNC reduces molecular oxygen to 2 water molecules using 4 electrons from cytochrome c in the IMS and 4 protons from the mitochondrial matrix. The polypeptide is Cytochrome c oxidase subunit 2 (Caenorhabditis elegans).